The sequence spans 3423 residues: Genome polyprotein (3423 aa).

Residues 1–25 (MKNPKKKSGGFRIVNMLKRGVARVS) are disordered. Over 1 to 104 (MKNPKKKSGG…INARKEKKRR (104 aa)) the chain is Cytoplasmic. The interval 37–72 (LLLGHGPIRMVLAILAFLRFTAIKPSLGLINRWGSV) is hydrophobic; homodimerization of capsid protein C. The propeptide at 105–122 (GADTSVGIVGLLLTTAMA) is ER anchor for capsid protein C, removed in mature form by serine protease NS3. A helical transmembrane segment spans residues 105–125 (GADTSVGIVGLLLTTAMAAEV). Residues 126-249 (TRRGSAYYMY…YTKHLIRVEN (124 aa)) lie on the Extracellular side of the membrane. N-linked (GlcNAc...) asparagine; by host glycosylation is present at Asn-192. The helical transmembrane segment at 250–269 (WIFRNPGFALAAAAIAWLLG) threads the bilayer. Residues 270–274 (SSTSQ) are Cytoplasmic-facing. Residues 275-290 (KVIYLVMILLIAPAYS) form a helical membrane-spanning segment. Residues 291-745 (IRCIGVSNRD…HQIFGAAFKS (455 aa)) lie on the Extracellular side of the membrane. Residue Lys-328 forms a Glycyl lysine isopeptide (Lys-Gly) (interchain with G-Cter in ubiquitin) linkage. Intrachain disulfides connect Cys-350-Cys-406 and Cys-382-Cys-411. Residues 388–401 (DRGWGNGCGLFGKG) are fusion peptide. Residue Asn-444 is glycosylated (N-linked (GlcNAc...) asparagine; by host). 2 cysteine pairs are disulfide-bonded: Cys-480–Cys-581 and Cys-598–Cys-629. Lys-571 is covalently cross-linked (Glycyl lysine isopeptide (Lys-Gly) (interchain with G-Cter in ubiquitin)). Residues 746-767 (LFGGMSWFSQILIGTLLMWLGL) traverse the membrane as a helical segment. Over 768–773 (NTKNGS) the chain is Cytoplasmic. Residues 774 to 794 (ISLMCLALGGVLIFLSTAVSA) form a helical membrane-spanning segment. Residues 795–1177 (DVGCSVDFSK…EGLKKRMTTK (383 aa)) lie on the Lumenal side of the membrane. 6 cysteine pairs are disulfide-bonded: Cys-798-Cys-809, Cys-849-Cys-937, Cys-973-Cys-1017, Cys-1074-Cys-1123, Cys-1085-Cys-1106, and Cys-1107-Cys-1110. N-linked (GlcNAc...) asparagine; by host glycosylation is found at Asn-924 and Asn-1001. A helical transmembrane segment spans residues 1178-1198 (IIISTSMAVLVAMILGGFSMS). Topologically, residues 1199 to 1220 (DLAKLAILMGATFAEMNTGGDV) are cytoplasmic. A helical membrane pass occupies residues 1221–1241 (AHLALIAAFKVRPALLVSFIF). Residues 1242 to 1270 (RANWTPRESMLLALASCLLQTAISALEGD) lie on the Lumenal side of the membrane. The helical transmembrane segment at 1271 to 1291 (LMVLINGFALAWLAIRAMVVP) threads the bilayer. Topologically, residues 1292–1295 (RTDN) are cytoplasmic. Residues 1296–1316 (ITLAILAALTPLARGTLLVAW) form a helical membrane-spanning segment. Residues 1317–1345 (RAGLATCGGFMLLSLKGKGSVKKNLPFVM) lie on the Lumenal side of the membrane. Residues 1346-1366 (ALGLTAVRLVDPINVVGLLLL) form a helical membrane-spanning segment. Topologically, residues 1367-1373 (TRSGKRS) are cytoplasmic. Residues 1374–1394 (WPPSEVLTAVGLICALAGGFA) traverse the membrane as a helical segment. Over 1395–1397 (KAD) the chain is Lumenal. The helical transmembrane segment at 1398–1418 (IEMAGPMAAVGLLIVSYVVSG) threads the bilayer. Residues 1419–1472 (KSVDMYIERAGDITWEKDAEVTGNSPRLDVALDESGDFSLVEDDGPPMREIILK) are Cytoplasmic-facing. The tract at residues 1425–1464 (IERAGDITWEKDAEVTGNSPRLDVALDESGDFSLVEDDGP) is interacts with and activates NS3 protease. The tract at residues 1429–1451 (GDITWEKDAEVTGNSPRLDVALD) is disordered. Residues 1473–1493 (VVLMTICGMNPIAIPFAAGAW) constitute an intramembrane region (helical). Topologically, residues 1494 to 2170 (YVYVKTGKRS…KAAAAQLPET (677 aa)) are lumenal. The 178-residue stretch at 1503–1680 (SGALWDVPAP…RREEETPVEC (178 aa)) folds into the Peptidase S7 domain. Catalysis depends on charge relay system; for serine protease NS3 activity residues His-1553, Asp-1577, and Ser-1637. The Helicase ATP-binding domain maps to 1683–1839 (PSMLKKKQLT…DSNSPIMDTE (157 aa)). The important for RNA-binding stretch occupies residues 1687–1690 (KKKQ). Residue 1696-1703 (LHPGAGKT) participates in ATP binding. A DEAH box motif is present at residues 1787 to 1790 (DEAH). In terms of domain architecture, Helicase C-terminal spans 1834-2013 (PIMDTEVEVP…GLIASLYRPE (180 aa)). An N6-acetyllysine; by host modification is found at Lys-1891. A helical membrane pass occupies residues 2171–2191 (LETIMLLGLLGTVSLGIFFVL). Topologically, residues 2192 to 2195 (MRNK) are lumenal. The helical intramembrane region spans 2196–2216 (GIGKMGFGMVTLGASAWLMWL). Residues 2217-2218 (SE) lie on the Cytoplasmic side of the membrane. Residues 2219–2239 (IEPARIACVLIVVFLLLVVLI) traverse the membrane as a helical segment. Topologically, residues 2240–2254 (PEPEKQRSPQDNQMA) are lumenal. Residues 2255–2269 (IIIMVAVGLLGLITA) constitute an intramembrane region (helical). Residues 2270–2307 (NELGWLERTKSDLSHLMGRREEGATIGFSMDIDLRPAS) are Lumenal-facing. The helical intramembrane region spans 2308-2328 (AWAIYAALTTFITPAVQHAVT). Residues 2329-2344 (TSYNNYSLMAMATQAG) are Lumenal-facing. A helical transmembrane segment spans residues 2345 to 2365 (VLFGMGKGMPFYAWDFGVPLL). The Cytoplasmic portion of the chain corresponds to 2366–2375 (MIGCYSQLTP). A helical transmembrane segment spans residues 2376–2396 (LTLIVAIILLVAHYMYLIPGL). The Lumenal portion of the chain corresponds to 2397–2441 (QAAAARAAQKRTAAGIMKNPVVDGIVVTDIDTMTIDPQVEKKMGQ). The helical transmembrane segment at 2442–2462 (VLLIAVAVSSAILSRTAWGWG) threads the bilayer. At 2463-3423 (EAGALITAAT…GEEGSTPGVL (961 aa)) the chain is on the cytoplasmic side. Positions 2521-2785 (GGGTGETLGE…DVNLGSGTRA (265 aa)) constitute an mRNA cap 0-1 NS5-type MT domain. Position 2533-2539 (2533-2539 (KARLNQM)) interacts with GTP. Ser-2576 contributes to the S-adenosyl-L-methionine binding site. At Ser-2576 the chain carries Phosphoserine. Residue Lys-2581 is the For 2'-O-MTase activity of the active site. An SUMO-interacting motif (SIM) region spans residues 2597–2600 (VIDL). S-adenosyl-L-methionine-binding residues include Gly-2606, Trp-2607, Thr-2624, Lys-2625, His-2630, Glu-2631, Asp-2651, Val-2652, Asp-2666, and Ile-2667. The active-site For 2'-O-MTase activity is the Asp-2666. 2669 to 2675 (ESSSSPE) provides a ligand contact to GTP. Lys-2702 (for 2'-O-MTase activity) is an active-site residue. 2733–2735 (RNS) contributes to the GTP binding site. Residue Glu-2738 is the For 2'-O-MTase activity of the active site. Tyr-2740 lines the S-adenosyl-L-methionine pocket. The Nuclear localization signal (NLS) motif lies at 2908–2914 (KHKRPRV). Positions 2959, 2963, 2968, and 2971 each coordinate Zn(2+). The 151-residue stretch at 3049–3199 (GRMYADDTAG…KPIDDRFAHA (151 aa)) folds into the RdRp catalytic domain. Zn(2+) contacts are provided by His-3234, Cys-3250, and Cys-3369.

It in the N-terminal section; belongs to the class I-like SAM-binding methyltransferase superfamily. mRNA cap 0-1 NS5-type methyltransferase family. Homodimer. Interacts with host SERTAD3; this interaction promotes capsid protein C degradation. Interacts with host CAPRIN1; this interaction is probably linked to the inhibition of stress granules formation by the virus. Interacts with host G3BP1; this interaction is probably linked to the inhibition of stress granules formation by the virus. In terms of assembly, forms heterodimers with envelope protein E in the endoplasmic reticulum and Golgi. Interacts with non-structural protein 2A. As to quaternary structure, homodimer; in the endoplasmic reticulum and Golgi. Interacts with host TYRO3, AXL and DC-SIGN proteins. Interacts with non-structural protein 2A. Interacts with host HAVCR1; this interaction likely mediates virus attachment to host cell. Interacts with host NCAM1. Interacts with host HSPA5. Interacts with Aedes aegypti SRPN25, APY and venom allergen-1 salivary proteins; the interactions do not affect Zika virus replication in human endothelial cells and keratinocytes. Homodimer; Homohexamer when secreted. Interacts with host TBK1. Interacts with host USP8. Interacts with envelope protein E. In terms of assembly, interacts with the structural protein prM/E complex, and the NS2B/NS3 protease complex. As to quaternary structure, forms a heterodimer with serine protease NS3. May form homooligomers. Interacts with human SPCS1. Interacts with non-structural protein 2A. Forms a heterodimer with NS2B. Interacts with NS4B. Interacts with unphosphorylated RNA-directed RNA polymerase NS5; this interaction stimulates RNA-directed RNA polymerase NS5 guanylyltransferase activity. Interacts with non-structural protein 2A. Interacts with host SHFL; this interaction promotes NS3 degradation via a lysosome-dependent pathway. Interacts with host CEP63; this interaction disorganizes the centrosome and inhibits host innate immune response. In terms of assembly, may interact with host ANKLE2; the interaction may cause defects in brain development, such as microcephaly. May interact with host SRPRA and SEC61G. As to quaternary structure, interacts with serine protease NS3. Interacts with NS1. Homodimer; dimerization may negatively regulate the GTase activity, a crucial step in the capping process. Interacts with host STAT2; this interaction inhibits the phosphorylation of the latter, and, when all viral proteins are present (polyprotein), targets STAT2 for degradation. Interacts with host TBK1 and IKBKE; these interactions lead to the inhibition of the host RIG-I signaling pathway. Interacts with host PAF1 complex; the interaction may prevent the recruitment of the host PAF1 complex to interferon-responsive genes, and thus reduces the immune response. Interacts with serine protease NS3. Interacts with host KPNA2. Interacts with host ZSWIM8; this interaction allows STAT2 binding to ZSWIM8 and subsequent proteasomal degradation leading to inhibition of interferon signaling. Specific enzymatic cleavages in vivo yield mature proteins. Cleavages in the lumen of endoplasmic reticulum are performed by host signal peptidase, whereas cleavages in the cytoplasmic side are performed by serine protease NS3. Signal cleavage at the 2K-4B site requires a prior NS3 protease-mediated cleavage at the 4A-2K site. Post-translationally, cleaved in post-Golgi vesicles by a host furin, releasing the mature small envelope protein M, and peptide pr. This cleavage is incomplete as up to 30% of viral particles still carry uncleaved prM. In terms of processing, N-glycosylation plays a role in virulence in mammalian and mosquito hosts, but may have no effect on neurovirulence. Ubiquitination by host TRIM7 promotes virus attachment and fusion of the virus and the host endosome membrane. Post-translationally, N-glycosylated. The excreted form is glycosylated, which is required for efficient secretion of the protein from infected cells. In terms of processing, ubiquitination by host TRIM22 leads to proteasomal degradation. Acetylated by host KAT5. Acetylation modulates NS3 RNA-binding and unwinding activities and plays an important positive role for viral replication. Post-translationally, phosphorylated on serines residues. This phosphorylation may trigger NS5 nuclear localization. In terms of processing, sumoylated, required for regulating IFN induced interferon stimulated genes/ISGs.

The protein resides in the virion. It localises to the host nucleus. The protein localises to the host cytoplasm. Its subcellular location is the host perinuclear region. It is found in the secreted. The protein resides in the virion membrane. It localises to the host endoplasmic reticulum membrane. It carries out the reaction a 5'-end (5'-triphosphoguanosine)-ribonucleoside in mRNA + S-adenosyl-L-methionine = a 5'-end (N(7)-methyl 5'-triphosphoguanosine)-ribonucleoside in mRNA + S-adenosyl-L-homocysteine. The enzyme catalyses a 5'-end (N(7)-methyl 5'-triphosphoguanosine)-ribonucleoside in mRNA + S-adenosyl-L-methionine = a 5'-end (N(7)-methyl 5'-triphosphoguanosine)-(2'-O-methyl-ribonucleoside) in mRNA + S-adenosyl-L-homocysteine + H(+). The catalysed reaction is RNA(n) + a ribonucleoside 5'-triphosphate = RNA(n+1) + diphosphate. It catalyses the reaction Selective hydrolysis of -Xaa-Xaa-|-Yaa- bonds in which each of the Xaa can be either Arg or Lys and Yaa can be either Ser or Ala.. It carries out the reaction a ribonucleoside 5'-triphosphate + H2O = a ribonucleoside 5'-diphosphate + phosphate + H(+). The enzyme catalyses ATP + H2O = ADP + phosphate + H(+). Its function is as follows. Plays a role in virus budding by binding to the cell membrane and gathering the viral RNA into a nucleocapsid that forms the core of the mature virus particle. During virus entry, may induce genome penetration into the host cytoplasm after hemifusion induced by the surface proteins. Can migrate to the cell nucleus where it modulates host functions. Inhibits the integrated stress response (ISR) in the infected cell. Functionally, inhibits RNA silencing by interfering with host Dicer. In terms of biological role, prevents premature fusion activity of envelope proteins in trans-Golgi by binding to envelope protein E at pH 6.0. After virion release in extracellular space, gets dissociated from E dimers. Plays a role in host immune defense modulation and protection of envelope protein E during virion synthesis. PrM-E cleavage is inefficient, many virions are only partially matured and immature prM-E proteins could play a role in immune evasion. Contributes to fetal microcephaly in humans. Acts as a chaperone for envelope protein E during intracellular virion assembly by masking and inactivating envelope protein E fusion peptide. prM is the only viral peptide matured by host furin in the trans-Golgi network probably to avoid catastrophic activation of the viral fusion activity in acidic Golgi compartment prior to virion release. Its function is as follows. May play a role in virus budding. Exerts cytotoxic effects by activating a mitochondrial apoptotic pathway through M ectodomain. May display a viroporin activity. Functionally, binds to host cell surface receptors and mediates fusion between viral and cellular membranes. Efficient virus attachment to cell is, at least in part, mediated by host HAVCR1 in a cell-type specific manner. In addition, host NCAM1 can also be used as entry receptor. Interaction with host HSPA5 plays an important role in the early stages of infection as well. Envelope protein is synthesized in the endoplasmic reticulum and forms a heterodimer with protein prM. The heterodimer plays a role in virion budding in the ER, and the newly formed immature particle is covered with 60 spikes composed of heterodimers between precursor prM and envelope protein E. The virion is transported to the Golgi apparatus where the low pH causes the dissociation of PrM-E heterodimers and formation of E homodimers. PrM-E cleavage is inefficient, many virions are only partially matured and immature prM-E proteins could play a role in immune evasion. In terms of biological role, plays a role in the inhibition of host RLR-induced interferon-beta activation by targeting TANK-binding kinase 1/TBK1. In addition, recruits the host deubiquitinase USP8 to cleave 'Lys-11'-linked polyubiquitin chains from caspase-1/CASP1 thus inhibiting its proteasomal degradation. In turn, stabilized CASP1 promotes cleavage of cGAS, which inhibits its ability to recognize mitochondrial DNA release and initiate type I interferon signaling. Component of the viral RNA replication complex that recruits genomic RNA, the structural protein prM/E complex, and the NS2B/NS3 protease complex to the virion assembly site and orchestrates virus morphogenesis. Antagonizes also the host MDA5-mediated induction of alpha/beta interferon antiviral response. May disrupt adherens junction formation and thereby impair proliferation of radial cells in the host cortex. Its function is as follows. Required cofactor for the serine protease function of NS3. Functionally, displays three enzymatic activities: serine protease, NTPase and RNA helicase. NS3 serine protease, in association with NS2B, performs its autocleavage and cleaves the polyprotein at dibasic sites in the cytoplasm: C-prM, NS2A-NS2B, NS2B-NS3, NS3-NS4A, NS4A-2K and NS4B-NS5. NS3 RNA helicase binds RNA and unwinds dsRNA in the 3' to 5' direction. Inhibits the integrated stress response (ISR) in the infected cell by blocking stress granules assembly. Disrupts host centrosome organization in a CEP63-dependent manner to degrade host TBK1 and inhibits innate immune response. In terms of biological role, regulates the ATPase activity of the NS3 helicase activity. NS4A allows NS3 helicase to conserve energy during unwinding. Cooperatively with NS4B suppresses the Akt-mTOR pathway and leads to cellular dysregulation. By inhibiting host ANKLE2 functions, may cause defects in brain development, such as microcephaly. Also antagonizes the host MDA5-mediated induction of alpha/beta interferon antiviral response. Inhibits the integrated stress response (ISR) in the infected cell by blocking stress granules assembly. Functions as a signal peptide for NS4B and is required for the interferon antagonism activity of the latter. Its function is as follows. Induces the formation of ER-derived membrane vesicles where the viral replication takes place. Also plays a role in the inhibition of host RLR-induced interferon-beta production at TANK-binding kinase 1/TBK1 level. Cooperatively with NS4A suppresses the Akt-mTOR pathway and leads to cellular dysregulation. Functionally, replicates the viral (+) and (-) RNA genome, and performs the capping of genomes in the cytoplasm. Methylates viral RNA cap at guanine N-7 and ribose 2'-O positions. Once sufficient NS5 is expressed, binds to the cap-proximal structure and inhibits further translation of the viral genome. Besides its role in RNA genome replication, also prevents the establishment of a cellular antiviral state by blocking the interferon-alpha/beta (IFN-alpha/beta) signaling pathway. Mechanistically, interferes with host kinases TBK1 and IKKE upstream of interferon regulatory factor 3/IRF3 to inhibit the RIG-I pathway. Also antagonizes type I interferon signaling by targeting STAT2 for degradation by the proteasome thereby preventing activation of JAK-STAT signaling pathway. Mechanistically, acts as a scaffold protein to connect host ZSWIM8/CUL3 ligase complex and STAT2, leading to STAT2 degradation. Within the host nucleus, disrupts host SUMO1 and STAT2 co-localization with PML, resulting in PML degradation. May also reduce immune responses by preventing the recruitment of the host PAF1 complex to interferon-responsive genes. The protein is Genome polyprotein of Zika virus (isolate ZIKV/Human/French Polynesia/10087PF/2013) (ZIKV).